A 165-amino-acid chain; its full sequence is Phosphopantetheine adenylyltransferase (165 aa).

Belongs to the eukaryotic CoaD family.

Its subcellular location is the cytoplasm. The enzyme catalyses (R)-4'-phosphopantetheine + ATP + H(+) = 3'-dephospho-CoA + diphosphate. Its pathway is cofactor biosynthesis; coenzyme A biosynthesis. In terms of biological role, reversibly transfers an adenylyl group from ATP to 4'-phosphopantetheine, yielding dephospho-CoA (dPCoA) and pyrophosphate. The sequence is that of Phosphopantetheine adenylyltransferase from Thermococcus kodakarensis (strain ATCC BAA-918 / JCM 12380 / KOD1) (Pyrococcus kodakaraensis (strain KOD1)).